Here is an 804-residue protein sequence, read N- to C-terminus: Putative mRNA-capping enzyme P5 (804 aa).

Belongs to the phytoreovirus protein P5 family.

It localises to the virion. Its subcellular location is the host cytoplasm. It catalyses the reaction a 5'-end diphospho-ribonucleoside in mRNA + GTP + H(+) = a 5'-end (5'-triphosphoguanosine)-ribonucleoside in mRNA + diphosphate. It functions in the pathway mRNA processing; mRNA capping. In terms of biological role, enzyme involved in mRNA capping (Potential). Binds to GTP and might have guanylyltransferase activity. Together with the RNA-directed RNA polymerase P1 and protein P7, forms an transcriptional complex positioned near the channels situated at each of the five-fold vertices of the core. This chain is Putative mRNA-capping enzyme P5, found in Catharanthus roseus (Madagascar periwinkle).